We begin with the raw amino-acid sequence, 87 residues long: Protein OPG096 (87 aa).

2 consecutive transmembrane segments (helical) span residues 39–59 and 67–87; these read PLIR…IFTV and QMLL…YFIL.

It belongs to the orthopoxvirus OPG096 family. As to quaternary structure, interacts with OPG158.

The protein localises to the virion membrane. It localises to the host cytoplasm. It is found in the host endoplasmic reticulum membrane. In terms of biological role, early protein involved in virion morphogenesis. Participates in the formation and elongation of crescent-shaped membrane precursors of immature virions in cytoplasmic factories. This chain is Protein OPG096 (OPG096), found in Vaccinia virus (strain Copenhagen) (VACV).